Reading from the N-terminus, the 56-residue chain is Prokaryotic ubiquitin-like protein UBact (56 aa).

Residues 1–56 (MPDQAQKTRPVGPGPSGGGEGPGSPKVEKPNTEELLKRMRKVDPDQAKRYRQRTGQ) form a disordered region. The span at 26–48 (KVEKPNTEELLKRMRKVDPDQAK) shows a compositional bias: basic and acidic residues. The residue at position 56 (glutamine 56) is a Deamidated glutamine. An Isoglutamyl lysine isopeptide (Gln-Lys) (interchain with K-? in acceptor proteins) cross-link involves residue glutamine 56.

It belongs to the ubiquitin-like protein UBact family. Post-translationally, may be modified by deamidation of its C-terminal glutamine to glutamate by the adjacently encoded deamidase. This could be a prerequisite to the subsequent conjugation, as shown in the other prokaryotic ubiquitin-like protein Pup.

In terms of biological role, may function as a protein modifier covalently attached to lysine residues of substrate proteins. This may serve to target the modified proteins for degradation by proteasomes. The protein is Prokaryotic ubiquitin-like protein UBact of Pedosphaera parvula (strain Ellin514).